Consider the following 695-residue polypeptide: DNA ligase (695 aa).

NAD(+) is bound by residues 44-48 (DAEYD), 93-94 (SL), and glutamate 123. Lysine 125 acts as the N6-AMP-lysine intermediate in catalysis. Positions 146, 184, 300, and 324 each coordinate NAD(+). The Zn(2+) site is built by cysteine 418, cysteine 421, cysteine 436, and cysteine 442. A BRCT domain is found at 605–694 (SAAKPLAGIT…PDAARSMAQR (90 aa)).

Belongs to the NAD-dependent DNA ligase family. LigA subfamily. It depends on Mg(2+) as a cofactor. Mn(2+) serves as cofactor.

It carries out the reaction NAD(+) + (deoxyribonucleotide)n-3'-hydroxyl + 5'-phospho-(deoxyribonucleotide)m = (deoxyribonucleotide)n+m + AMP + beta-nicotinamide D-nucleotide.. Functionally, DNA ligase that catalyzes the formation of phosphodiester linkages between 5'-phosphoryl and 3'-hydroxyl groups in double-stranded DNA using NAD as a coenzyme and as the energy source for the reaction. It is essential for DNA replication and repair of damaged DNA. The polypeptide is DNA ligase (Acidothermus cellulolyticus (strain ATCC 43068 / DSM 8971 / 11B)).